Reading from the N-terminus, the 166-residue chain is RNA pyrophosphohydrolase (166 aa).

The Nudix hydrolase domain occupies 6–149 (GFRPNVGIIL…KRDVYRKAMM (144 aa)). The Nudix box motif lies at 38–59 (GGIHFGETPEQALYRELREEVG).

The protein belongs to the Nudix hydrolase family. RppH subfamily. Requires a divalent metal cation as cofactor.

Its function is as follows. Accelerates the degradation of transcripts by removing pyrophosphate from the 5'-end of triphosphorylated RNA, leading to a more labile monophosphorylated state that can stimulate subsequent ribonuclease cleavage. In Acinetobacter baylyi (strain ATCC 33305 / BD413 / ADP1), this protein is RNA pyrophosphohydrolase.